Reading from the N-terminus, the 123-residue chain is NADH-quinone oxidoreductase subunit A (123 aa).

Helical transmembrane passes span 11-31 (YLPIAIFFGIAVLLSVLIMIL), 68-88 (LVAILFIIFDLEIAFLVPWAI), and 93-113 (IGKMGFFSMMFFLFVLIIGFI).

Belongs to the complex I subunit 3 family. NDH-1 is composed of 14 different subunits. Subunits NuoA, H, J, K, L, M, N constitute the membrane sector of the complex.

Its subcellular location is the cell inner membrane. It carries out the reaction a quinone + NADH + 5 H(+)(in) = a quinol + NAD(+) + 4 H(+)(out). Its function is as follows. NDH-1 shuttles electrons from NADH, via FMN and iron-sulfur (Fe-S) centers, to quinones in the respiratory chain. The immediate electron acceptor for the enzyme in this species is believed to be ubiquinone. Couples the redox reaction to proton translocation (for every two electrons transferred, four hydrogen ions are translocated across the cytoplasmic membrane), and thus conserves the redox energy in a proton gradient. This is NADH-quinone oxidoreductase subunit A from Rickettsia prowazekii (strain Madrid E).